The primary structure comprises 834 residues: Serine/threonine-protein kinase TNNI3K (834 aa).

The N-myristoyl glycine moiety is linked to residue glycine 2. The stretch at 21-49 (SESYAIIIERLEDDLQIKENEFQELRHIF) forms a coiled coil. 10 ANK repeats span residues 66–96 (RGLS…RPSR), 100–129 (NGFP…DVQQ), 133–162 (GGLT…NVNV), 166–195 (VFFT…DVNV), 199–229 (VGDR…DVNA), 233–262 (EDHV…EVQP), 268–297 (YGDT…TESL), 303–334 (FSET…NINH), 338–367 (DGHT…DMNL), and 380–409 (DEQT…PQDE). Residues 462–722 (IEFHEIIGSG…EVVRKLEECL (261 aa)) form the Protein kinase domain. Residues 468 to 476 (IGSGSFGKV) and lysine 489 contribute to the ATP site. Aspartate 587 functions as the Proton acceptor in the catalytic mechanism. Residues 815–834 (PMSPMHLHSRRNSGSFEDGN) form a disordered region.

This sequence belongs to the protein kinase superfamily. TKL Ser/Thr protein kinase family. MAP kinase kinase kinase subfamily. In terms of assembly, interacts with TNNI3, ACTC, ACTA1, MYBPC3, AIP, FABP3 and HADHB. Mg(2+) is required as a cofactor. Post-translationally, autophosphorylated.

It localises to the nucleus. The protein resides in the cytoplasm. It catalyses the reaction L-seryl-[protein] + ATP = O-phospho-L-seryl-[protein] + ADP + H(+). The enzyme catalyses L-threonyl-[protein] + ATP = O-phospho-L-threonyl-[protein] + ADP + H(+). Its function is as follows. May play a role in cardiac physiology. This Mus musculus (Mouse) protein is Serine/threonine-protein kinase TNNI3K.